The chain runs to 292 residues: Glycine--tRNA ligase alpha subunit (292 aa).

Belongs to the class-II aminoacyl-tRNA synthetase family. In terms of assembly, tetramer of two alpha and two beta subunits.

It localises to the cytoplasm. The enzyme catalyses tRNA(Gly) + glycine + ATP = glycyl-tRNA(Gly) + AMP + diphosphate. This is Glycine--tRNA ligase alpha subunit from Desulfovibrio desulfuricans (strain ATCC 27774 / DSM 6949 / MB).